Consider the following 326-residue polypeptide: 5-dehydro-2-deoxygluconokinase (326 aa).

It belongs to the carbohydrate kinase PfkB family.

It carries out the reaction 5-dehydro-2-deoxy-D-gluconate + ATP = 6-phospho-5-dehydro-2-deoxy-D-gluconate + ADP + H(+). Its pathway is polyol metabolism; myo-inositol degradation into acetyl-CoA; acetyl-CoA from myo-inositol: step 5/7. Catalyzes the phosphorylation of 5-dehydro-2-deoxy-D-gluconate (2-deoxy-5-keto-D-gluconate or DKG) to 6-phospho-5-dehydro-2-deoxy-D-gluconate (DKGP). This Shouchella clausii (strain KSM-K16) (Alkalihalobacillus clausii) protein is 5-dehydro-2-deoxygluconokinase.